The primary structure comprises 281 residues: GDT1-like protein 4 (281 aa).

An N-terminal signal peptide occupies residues 1–22; sequence MARRVSTTRLLLLLLLVAAAAA. 6 consecutive transmembrane segments (helical) span residues 66–86, 105–125, 137–157, 188–208, 226–246, and 258–278; these read AGLGLFDAFFASLSMILVSEI, TVLSGALSALVVMTILSTGLG, TNSAATVLYAFFGLRLLYIAW, IFSRFCTPIFLESFVLTFLAE, AVGVAVGATLGHTICTSFAVV, and GTVATIGGLLFLGFSLSSYFY.

This sequence belongs to the GDT1 family.

Its subcellular location is the membrane. This is GDT1-like protein 4 from Oryza sativa subsp. indica (Rice).